Here is a 198-residue protein sequence, read N- to C-terminus: Recombination protein RecR (198 aa).

The segment at 56–71 (CKVCGNFSEEDECVIC) adopts a C4-type zinc-finger fold. The Toprim domain maps to 79-174 (GVICVVEEPK…RVSKLASGLP (96 aa)).

The protein belongs to the RecR family.

Functionally, may play a role in DNA repair. It seems to be involved in an RecBC-independent recombinational process of DNA repair. It may act with RecF and RecO. The protein is Recombination protein RecR of Tropheryma whipplei (strain Twist) (Whipple's bacillus).